The chain runs to 633 residues: Phosphomethylpyrimidine synthase (633 aa).

The span at 1–13 (MNIRSNPDTTLPA) shows a compositional bias: polar residues. A disordered region spans residues 1-22 (MNIRSNPDTTLPAVTTGPLPSS). Residues N221, M250, Y279, H315, 335 to 337 (SRG), 376 to 379 (DGLR), and E415 each bind substrate. Residue H419 participates in Zn(2+) binding. Residue Y442 participates in substrate binding. H483 provides a ligand contact to Zn(2+). 3 residues coordinate [4Fe-4S] cluster: C563, C566, and C571.

It belongs to the ThiC family. Homodimer. Requires [4Fe-4S] cluster as cofactor.

It catalyses the reaction 5-amino-1-(5-phospho-beta-D-ribosyl)imidazole + S-adenosyl-L-methionine = 4-amino-2-methyl-5-(phosphooxymethyl)pyrimidine + CO + 5'-deoxyadenosine + formate + L-methionine + 3 H(+). Its pathway is cofactor biosynthesis; thiamine diphosphate biosynthesis. Functionally, catalyzes the synthesis of the hydroxymethylpyrimidine phosphate (HMP-P) moiety of thiamine from aminoimidazole ribotide (AIR) in a radical S-adenosyl-L-methionine (SAM)-dependent reaction. This Bradyrhizobium sp. (strain BTAi1 / ATCC BAA-1182) protein is Phosphomethylpyrimidine synthase.